The primary structure comprises 590 residues: DNA primase (590 aa).

The CHC2-type zinc finger occupies 37–61 (CPFHKEKTPSFSVSPTKQFYHCFSC). One can recognise a Toprim domain in the interval 255 to 337 (GRILVVEGYM…DKSLHFLFLP (83 aa)). Mg(2+) is bound by residues Glu261, Asp305, and Asp307.

This sequence belongs to the DnaG primase family. As to quaternary structure, monomer. Interacts with DnaB. The cofactor is Zn(2+). Mg(2+) serves as cofactor.

It catalyses the reaction ssDNA + n NTP = ssDNA/pppN(pN)n-1 hybrid + (n-1) diphosphate.. RNA polymerase that catalyzes the synthesis of short RNA molecules used as primers for DNA polymerase during DNA replication. The sequence is that of DNA primase from Neisseria meningitidis serogroup B (strain ATCC BAA-335 / MC58).